The chain runs to 227 residues: Claudin-15 (227 aa).

A topological domain (cytoplasmic) is located at residue Met-1. A helical membrane pass occupies residues 2-24 (SIAVETFGFFMSALGLLMLGVTL). The Extracellular portion of the chain corresponds to 25–74 (PNSYWRVSTVHGNVITTNTIFENLWYSCATDSLGVSNCWDFPSMLALSGY). The cysteines at positions 52 and 62 are disulfide-linked. The chain crosses the membrane as a helical span at residues 75 to 99 (VQGCRALMITAILLGFLGLFLGMVG). Over 100-115 (LRCTNVGNIDLSRKAK) the chain is Cytoplasmic. Ser-111 is modified (phosphoserine). Residues 116 to 140 (LLAIAGAFHILAGACGMVAISWYAV) traverse the membrane as a helical segment. Residues 141 to 159 (NITTDFFNPLYVGTKYELG) lie on the Extracellular side of the membrane. The tract at residues 146-147 (FF) is important for the formation of tight-junction strand-like structures. Residues 160 to 182 (SALYLGWSASLLSILGGICVFST) traverse the membrane as a helical segment. The Cytoplasmic portion of the chain corresponds to 183-227 (CCCDSKEDPATRVGLPYKPSTVVTARATSDESDVSFGKYGKNAYV). Phosphoserine is present on residues Ser-211, Ser-214, and Ser-217.

It belongs to the claudin family. Can form homo- and heteropolymeric tight junction strands. Palmitoylated. Detected in kidney, jejunum and colon (at protein level).

Its subcellular location is the cell junction. It is found in the tight junction. The protein resides in the cell membrane. It carries out the reaction Na(+)(in) = Na(+)(out). It catalyses the reaction K(+)(in) = K(+)(out). The enzyme catalyses Cs(+)(in) = Cs(+)(out). The catalysed reaction is Rb(+)(in) = Rb(+)(out). It carries out the reaction Li(+)(in) = Li(+)(out). It catalyses the reaction NH4(+)(in) = NH4(+)(out). The enzyme catalyses methylamine(out) = methylamine(in). The catalysed reaction is H2O(in) = H2O(out). Its function is as follows. Forms paracellular channels: polymerizes in tight junction strands with cation- and water-selective channels through the strands, conveying epithelial permeability in a process known as paracellular tight junction permeability. In intestinal epithelium, allows for sodium and water fluxes from the peritoneal side to the lumen of the intestine to regulate nutrient absorption and intestinal morphogenesis. The protein is Claudin-15 of Rattus norvegicus (Rat).